The following is a 406-amino-acid chain: Glutamyl-tRNA reductase (406 aa).

Substrate-binding positions include 49–52 (TCHR), Ser-107, 112–114 (EPQ), and Gln-118. The active-site Nucleophile is Cys-50. 187–192 (GAGETG) is an NADP(+) binding site.

It belongs to the glutamyl-tRNA reductase family. As to quaternary structure, homodimer.

It carries out the reaction (S)-4-amino-5-oxopentanoate + tRNA(Glu) + NADP(+) = L-glutamyl-tRNA(Glu) + NADPH + H(+). The protein operates within porphyrin-containing compound metabolism; protoporphyrin-IX biosynthesis; 5-aminolevulinate from L-glutamyl-tRNA(Glu): step 1/2. Catalyzes the NADPH-dependent reduction of glutamyl-tRNA(Glu) to glutamate 1-semialdehyde (GSA). This Thermomicrobium roseum (strain ATCC 27502 / DSM 5159 / P-2) protein is Glutamyl-tRNA reductase.